The primary structure comprises 338 residues: Putative peptide import ATP-binding protein BMEII0863 (338 aa).

The region spanning 10–263 is the ABC transporter domain; sequence KGLRTVFRTR…PRHPYTMGLL (254 aa). 43–50 serves as a coordination point for ATP; that stretch reads GESGSGKS.

The protein belongs to the ABC transporter superfamily. In terms of assembly, the complex is composed of two ATP-binding proteins (BMEII0863 and BMEII0864), two transmembrane proteins (BMEII0860 and BMEII0861) and a solute-binding protein (BMEII0859).

The protein resides in the cell inner membrane. Probably part of an ABC transporter complex that could be involved in peptide import. Probably responsible for energy coupling to the transport system. The polypeptide is Putative peptide import ATP-binding protein BMEII0863 (Brucella melitensis biotype 1 (strain ATCC 23456 / CCUG 17765 / NCTC 10094 / 16M)).